The primary structure comprises 60 residues: MDHRLLEIIACPVCNGKLYYSQDKQELICKLDNLAFPLRDGIPVLLETEARSLAAEESRP.

It belongs to the UPF0434 family.

This Enterobacter sp. (strain 638) protein is UPF0434 protein Ent638_1436.